A 274-amino-acid polypeptide reads, in one-letter code: Putative pyruvate, phosphate dikinase regulatory protein (274 aa).

150-157 (GPSRTSKT) lines the ADP pocket.

The protein belongs to the pyruvate, phosphate/water dikinase regulatory protein family. PDRP subfamily.

It catalyses the reaction N(tele)-phospho-L-histidyl/L-threonyl-[pyruvate, phosphate dikinase] + ADP = N(tele)-phospho-L-histidyl/O-phospho-L-threonyl-[pyruvate, phosphate dikinase] + AMP + H(+). The enzyme catalyses N(tele)-phospho-L-histidyl/O-phospho-L-threonyl-[pyruvate, phosphate dikinase] + phosphate + H(+) = N(tele)-phospho-L-histidyl/L-threonyl-[pyruvate, phosphate dikinase] + diphosphate. In terms of biological role, bifunctional serine/threonine kinase and phosphorylase involved in the regulation of the pyruvate, phosphate dikinase (PPDK) by catalyzing its phosphorylation/dephosphorylation. This is Putative pyruvate, phosphate dikinase regulatory protein from Rickettsia peacockii (strain Rustic).